The following is a 533-amino-acid chain: Protein mono-ADP-ribosyltransferase PARP3 (533 aa).

The tract at residues 1 to 30 (MAPKPKPWVQTEGPEKKKGRQAGREEDPFR) is disordered. Residue lysine 6 is modified to N6-(ADP-ribosyl)lysine. Residues glutamate 12, glutamate 15, glutamate 26, and glutamate 34 each carry the ADP-ribosyl glutamic acid modification. The short motif at 14-20 (PEKKKGR) is the Nuclear localization signal element. An N6-(ADP-ribosyl)lysine modification is found at lysine 37. Residues 59-150 (GTQVYEDYNC…DHFVSHPGKY (92 aa)) form the WGR domain. ADP-ribosyl aspartic acid is present on aspartate 141. Glutamate 163 carries the ADP-ribosyl glutamic acid modification. The region spanning 182 to 300 (PCSLDPATQK…DIELAQALQA (119 aa)) is the PARP alpha-helical domain. An ADP-ribosyl aspartic acid modification is found at aspartate 210. Glutamate 231, glutamate 309, glutamate 310, glutamate 344, and glutamate 449 each carry ADP-ribosyl glutamic acid. In terms of domain architecture, PARP catalytic spans 313–533 (HPLDRDYQLL…RLRYLLEVHL (221 aa)). Residues 454 to 482 (TDNPSLKSPPPGFDSVIARGHTEPDPTQD) form a disordered region.

This sequence belongs to the ARTD/PARP family. As to quaternary structure, interacts with PARP1; leading to activate PARP1 in absence of DNA. Interacts with PRKDC. Interacts with XRCC5/Ku80; the interaction is dependent on nucleic acids. Interacts with XRCC6/Ku70; the interaction is dependent on nucleic acids. Interacts with EZH2, HDAC1, HDAC2, SUZ12, YY1, LRIG3 and LIG4. Auto-mono-ADP-ribosylated. Widely expressed; the highest levels are in the kidney, skeletal muscle, liver, heart and spleen; also detected in pancreas, lung, placenta, brain, leukocytes, colon, small intestine, ovary, testis, prostate and thymus.

The protein localises to the nucleus. Its subcellular location is the chromosome. The protein resides in the cytoplasm. It is found in the cytoskeleton. It localises to the microtubule organizing center. The protein localises to the centrosome. Its subcellular location is the centriole. It carries out the reaction L-aspartyl-[protein] + NAD(+) = 4-O-(ADP-D-ribosyl)-L-aspartyl-[protein] + nicotinamide. The catalysed reaction is L-glutamyl-[protein] + NAD(+) = 5-O-(ADP-D-ribosyl)-L-glutamyl-[protein] + nicotinamide. The enzyme catalyses L-lysyl-[protein] + NAD(+) = N(6)-(ADP-D-ribosyl)-L-lysyl-[protein] + nicotinamide + H(+). Its activity is regulated as follows. Mono-ADP-ribosyltransferase activity of PARP3 is selectively inhibited by ME0328 compound; ME0328 does not inhibit other ARTD/PARP enzymes, such as PARP1. Mono-ADP-ribosyltransferase is strongly inhibited by KU0058948 compound. In terms of biological role, mono-ADP-ribosyltransferase that mediates mono-ADP-ribosylation of target proteins and plays a key role in the response to DNA damage. Mediates mono-ADP-ribosylation of glutamate, aspartate or lysine residues on target proteins. In contrast to PARP1 and PARP2, it is not able to mediate poly-ADP-ribosylation. Involved in DNA repair by mediating mono-ADP-ribosylation of a limited number of acceptor proteins involved in chromatin architecture and in DNA metabolism, such as histone H2B, XRCC5 and XRCC6. ADP-ribosylation follows DNA damage and appears as an obligatory step in a detection/signaling pathway leading to the reparation of DNA strand breaks. Involved in single-strand break repair by catalyzing mono-ADP-ribosylation of histone H2B on 'Glu-2' (H2BE2ADPr) of nucleosomes containing nicked DNA. Cooperates with the XRCC5-XRCC6 (Ku80-Ku70) heterodimer to limit end-resection thereby promoting accurate NHEJ. Suppresses G-quadruplex (G4) structures in response to DNA damage. Associates with a number of DNA repair factors and is involved in the response to exogenous and endogenous DNA strand breaks. Together with APLF, promotes the retention of the LIG4-XRCC4 complex on chromatin and accelerate DNA ligation during non-homologous end-joining (NHEJ). May link the DNA damage surveillance network to the mitotic fidelity checkpoint. Acts as a negative regulator of immunoglobulin class switch recombination, probably by controlling the level of AICDA /AID on the chromatin. In addition to proteins, also able to ADP-ribosylate DNA: mediates DNA mono-ADP-ribosylation of DNA strand break termini via covalent addition of a single ADP-ribose moiety to a 5'- or 3'-terminal phosphate residues in DNA containing multiple strand breaks. In Homo sapiens (Human), this protein is Protein mono-ADP-ribosyltransferase PARP3.